A 599-amino-acid chain; its full sequence is Sulfite reductase [NADPH] flavoprotein alpha-component (599 aa).

The Flavodoxin-like domain maps to 64 to 202 (VTLISASQTG…AASEWRARVV (139 aa)). FMN is bound by residues 70-75 (SQTGNA), 117-120 (STQG), and 153-162 (LGDTSYEFFC). Residues 234–448 (DAPLIATLSV…IEHNDNFRLP (215 aa)) form the FAD-binding FR-type domain. FAD is bound by residues threonine 322, alanine 356, 386 to 389 (RLYS), 404 to 406 (TVG), tyrosine 410, and 419 to 422 (GGAS). NADP(+)-binding positions include 519–520 (SR), 525–529 (KIYVQ), and aspartate 561. Residue tyrosine 599 coordinates FAD.

It belongs to the NADPH-dependent sulphite reductase flavoprotein subunit CysJ family. This sequence in the N-terminal section; belongs to the flavodoxin family. The protein in the C-terminal section; belongs to the flavoprotein pyridine nucleotide cytochrome reductase family. In terms of assembly, alpha(8)-beta(8). The alpha component is a flavoprotein, the beta component is a hemoprotein. FAD serves as cofactor. It depends on FMN as a cofactor.

It catalyses the reaction hydrogen sulfide + 3 NADP(+) + 3 H2O = sulfite + 3 NADPH + 4 H(+). Its pathway is sulfur metabolism; hydrogen sulfide biosynthesis; hydrogen sulfide from sulfite (NADPH route): step 1/1. Functionally, component of the sulfite reductase complex that catalyzes the 6-electron reduction of sulfite to sulfide. This is one of several activities required for the biosynthesis of L-cysteine from sulfate. The flavoprotein component catalyzes the electron flow from NADPH -&gt; FAD -&gt; FMN to the hemoprotein component. This Salmonella typhimurium (strain LT2 / SGSC1412 / ATCC 700720) protein is Sulfite reductase [NADPH] flavoprotein alpha-component.